Reading from the N-terminus, the 273-residue chain is Putative pyruvate, phosphate dikinase regulatory protein (273 aa).

153-160 is a binding site for ADP; sequence GVSRTSKS.

This sequence belongs to the pyruvate, phosphate/water dikinase regulatory protein family. PDRP subfamily.

It carries out the reaction N(tele)-phospho-L-histidyl/L-threonyl-[pyruvate, phosphate dikinase] + ADP = N(tele)-phospho-L-histidyl/O-phospho-L-threonyl-[pyruvate, phosphate dikinase] + AMP + H(+). It catalyses the reaction N(tele)-phospho-L-histidyl/O-phospho-L-threonyl-[pyruvate, phosphate dikinase] + phosphate + H(+) = N(tele)-phospho-L-histidyl/L-threonyl-[pyruvate, phosphate dikinase] + diphosphate. Bifunctional serine/threonine kinase and phosphorylase involved in the regulation of the pyruvate, phosphate dikinase (PPDK) by catalyzing its phosphorylation/dephosphorylation. The polypeptide is Putative pyruvate, phosphate dikinase regulatory protein (Ehrlichia chaffeensis (strain ATCC CRL-10679 / Arkansas)).